Consider the following 318-residue polypeptide: Acetyl-coenzyme A carboxylase carboxyl transferase subunit alpha (318 aa).

A CoA carboxyltransferase C-terminal domain is found at 39-297 (RLEKRSQTAL…SEALKAMVGK (259 aa)).

This sequence belongs to the AccA family. As to quaternary structure, acetyl-CoA carboxylase is a heterohexamer composed of biotin carboxyl carrier protein (AccB), biotin carboxylase (AccC) and two subunits each of ACCase subunit alpha (AccA) and ACCase subunit beta (AccD).

Its subcellular location is the cytoplasm. It catalyses the reaction N(6)-carboxybiotinyl-L-lysyl-[protein] + acetyl-CoA = N(6)-biotinyl-L-lysyl-[protein] + malonyl-CoA. It participates in lipid metabolism; malonyl-CoA biosynthesis; malonyl-CoA from acetyl-CoA: step 1/1. Its function is as follows. Component of the acetyl coenzyme A carboxylase (ACC) complex. First, biotin carboxylase catalyzes the carboxylation of biotin on its carrier protein (BCCP) and then the CO(2) group is transferred by the carboxyltransferase to acetyl-CoA to form malonyl-CoA. The sequence is that of Acetyl-coenzyme A carboxylase carboxyl transferase subunit alpha from Bartonella tribocorum (strain CIP 105476 / IBS 506).